A 137-amino-acid chain; its full sequence is Large ribosomal subunit protein uL16c (137 aa).

It belongs to the universal ribosomal protein uL16 family. As to quaternary structure, part of the 50S ribosomal subunit.

It is found in the plastid. The polypeptide is Large ribosomal subunit protein uL16c (rpl16) (Helicosporidium sp. subsp. Simulium jonesii (Green alga)).